A 264-amino-acid polypeptide reads, in one-letter code: Major prion protein (264 aa).

The signal sequence occupies residues 1–24 (MVKSHIGSWILVLFVAMWSDVGLC). The tract at residues 25 to 241 (KKRPKPGGGW…ESQAYYQRGA (217 aa)) is interaction with GRB2, ERI3 and SYN1. Positions 28-118 (PKPGGGWNTG…QWNKPSKPKT (91 aa)) are disordered. Over residues 37-54 (GGSRYPGPGSPGGNRYPP) the composition is skewed to low complexity. Tandem repeats lie at residues 54 to 62 (PQGGGGWGQ), 63 to 70 (PHGGGWGQ), 71 to 78 (PHGGGWGQ), 79 to 86 (PHGGGWGQ), 87 to 94 (PHGGGWGQ), and 95 to 103 (PHGGGGWGQ). The 6 X 8 AA tandem repeats of P-H-G-G-G-W-G-Q stretch occupies residues 54–103 (PQGGGGWGQPHGGGWGQPHGGGWGQPHGGGWGQPHGGGWGQPHGGGGWGQ). The span at 55–107 (QGGGGWGQPHGGGWGQPHGGGWGQPHGGGWGQPHGGGWGQPHGGGGWGQGGTH) shows a compositional bias: gly residues. Cu(2+)-binding residues include His-72, Gly-73, Gly-74, His-80, Gly-81, Gly-82, His-88, Gly-89, Gly-90, His-96, and Gly-98. A disulfide bond links Cys-190 and Cys-225. Residues Asn-192 and Asn-208 are each glycosylated (N-linked (GlcNAc...) asparagine). The GPI-anchor amidated alanine moiety is linked to residue Ala-241. The propeptide at 242 to 264 (SVILFSSPPVILLISFLIFLIVG) is removed in mature form.

This sequence belongs to the prion family. In terms of assembly, monomer and homodimer. Has a tendency to aggregate into amyloid fibrils containing a cross-beta spine, formed by a steric zipper of superposed beta-strands. Soluble oligomers may represent an intermediate stage on the path to fibril formation. Copper binding may promote oligomerization. Interacts with GRB2, APP, ERI3/PRNPIP and SYN1. Mislocalized cytosolically exposed PrP interacts with MGRN1; this interaction alters MGRN1 subcellular location and causes lysosomal enlargement. Interacts with KIAA1191.

The protein resides in the cell membrane. The protein localises to the golgi apparatus. Its function is as follows. Its primary physiological function is unclear. Has cytoprotective activity against internal or environmental stresses. May play a role in neuronal development and synaptic plasticity. May be required for neuronal myelin sheath maintenance. May play a role in iron uptake and iron homeostasis. Soluble oligomers are toxic to cultured neuroblastoma cells and induce apoptosis (in vitro). Association with GPC1 (via its heparan sulfate chains) targets PRNP to lipid rafts. Also provides Cu(2+) or Zn(2+) for the ascorbate-mediated GPC1 deaminase degradation of its heparan sulfate side chains. This chain is Major prion protein (PRNP), found in Ailuropoda melanoleuca (Giant panda).